The following is a 153-amino-acid chain: MRCPSCSHNGTRVLDSRPVDEGRSIRRRRECESCLSRFTTFERVEESPLIVVKKEGTREEFNKEKILRGLIKACEKRPVSLRQLEEVTQSVERELRNLGISEVKSDMIGEIVMEELRDIDDVAYVRFASVYRQFKDLNVFIEELKDILQKERE.

A zinc finger lies at 3-34 (CPSCSHNGTRVLDSRPVDEGRSIRRRRECESC). Residues 49–139 (LIVVKKEGTR…VYRQFKDLNV (91 aa)) form the ATP-cone domain.

Belongs to the NrdR family. Zn(2+) serves as cofactor.

Negatively regulates transcription of bacterial ribonucleotide reductase nrd genes and operons by binding to NrdR-boxes. The polypeptide is Transcriptional repressor NrdR (Bacillus anthracis (strain A0248)).